A 159-amino-acid chain; its full sequence is Transcriptional repressor NrdR (159 aa).

A compositionally biased stretch (polar residues) spans 1 to 11; that stretch reads MQCPTCQNTDS. The disordered stretch occupies residues 1–21; sequence MQCPTCQNTDSRVLESRSADS. A zinc finger spans residues 3-34; the sequence is CPTCQNTDSRVLESRSADSGKSVRRRRECLNC. The ATP-cone domain occupies 49-139; sequence VSVLKKDGGR…VYRKFNGVKD (91 aa).

The protein belongs to the NrdR family. It depends on Zn(2+) as a cofactor.

In terms of biological role, negatively regulates transcription of bacterial ribonucleotide reductase nrd genes and operons by binding to NrdR-boxes. In Prochlorococcus marinus (strain AS9601), this protein is Transcriptional repressor NrdR.